A 509-amino-acid chain; its full sequence is Maturase K (509 aa).

Belongs to the intron maturase 2 family. MatK subfamily.

It is found in the plastid. The protein resides in the chloroplast. Usually encoded in the trnK tRNA gene intron. Probably assists in splicing its own and other chloroplast group II introns. The chain is Maturase K from Avicennia marina (Grey mangrove).